The primary structure comprises 450 residues: 23S rRNA (uracil(1939)-C(5))-methyltransferase RlmD (450 aa).

The disordered stretch occupies residues 1 to 22 (MAKHDRGLRFQPAGGSRAPQIP). The TRAM domain maps to 20–78 (QIPVGKKQRLTIQRLANDGRGIAFVEGRTWFVSGALAGEEVEARVLGSHGKVVEARAER). The [4Fe-4S] cluster site is built by Cys-91, Cys-97, Cys-100, and Cys-179. Residues Gln-283, Phe-312, Asn-317, Glu-333, Asp-360, and Asp-381 each contribute to the S-adenosyl-L-methionine site. Cys-407 acts as the Nucleophile in catalysis.

This sequence belongs to the class I-like SAM-binding methyltransferase superfamily. RNA M5U methyltransferase family. RlmD subfamily.

The enzyme catalyses uridine(1939) in 23S rRNA + S-adenosyl-L-methionine = 5-methyluridine(1939) in 23S rRNA + S-adenosyl-L-homocysteine + H(+). Its function is as follows. Catalyzes the formation of 5-methyl-uridine at position 1939 (m5U1939) in 23S rRNA. This chain is 23S rRNA (uracil(1939)-C(5))-methyltransferase RlmD, found in Pseudomonas fluorescens (strain ATCC BAA-477 / NRRL B-23932 / Pf-5).